The primary structure comprises 632 residues: U-box domain-containing protein 14 (632 aa).

Residues 247–321 (VIPEYFRCPI…ALWCESNGIE (75 aa)) enclose the U-box domain. ARM repeat units lie at residues 377-416 (VDNRVCIAEAGAIPLLVELLSSPDPRTQEHSVTALLNLSI), 418-457 (EGNKGAIVDAGAITDIVEVLKNGSMEARENAAATLFSLSV), 459-498 (DENKVAIGAAGAIQALISLLEEGTRRGKKDAATAIFNLCI), 500-539 (QGNKSRAVKGGIVDPLTRLLKDAGGGMVDEALAILAILST), and 541-580 (QEGKTAIAEAESIPVLVEIIRTGSPRNRENAAAILWYLCI).

As to quaternary structure, homodimer. Interacts with SNL1. Binds to SD11, SD16, SD17, SD18, SD113, SD129 and SD25. Expressed in flowers, green siliques, seeds and rosette leaves.

It catalyses the reaction S-ubiquitinyl-[E2 ubiquitin-conjugating enzyme]-L-cysteine + [acceptor protein]-L-lysine = [E2 ubiquitin-conjugating enzyme]-L-cysteine + N(6)-ubiquitinyl-[acceptor protein]-L-lysine.. Its pathway is protein modification; protein ubiquitination. In terms of biological role, functions as an E3 ubiquitin ligase with specific E2 ubiquitin-conjugating enzymes. Undergoes auto-ubiquitination. The chain is U-box domain-containing protein 14 (PUB14) from Arabidopsis thaliana (Mouse-ear cress).